The chain runs to 720 residues: Putative fatty acid oxidation complex trifunctional enzyme (720 aa).

A 3-hydroxyacyl-CoA dehydrogenase region spans residues 1–384 (MQNEIKKVCV…SWKYGPFELL (384 aa)). Positions 453-720 (FVITTKMNCL…TIEKLKAIVK (268 aa)) are enoyl-CoA hydratase/isomerase.

The protein in the N-terminal section; belongs to the 3-hydroxyacyl-CoA dehydrogenase family. In the C-terminal section; belongs to the enoyl-CoA hydratase/isomerase family.

The catalysed reaction is a (3S)-3-hydroxyacyl-CoA + NAD(+) = a 3-oxoacyl-CoA + NADH + H(+). It catalyses the reaction a (3S)-3-hydroxyacyl-CoA = a (2E)-enoyl-CoA + H2O. It carries out the reaction a 4-saturated-(3S)-3-hydroxyacyl-CoA = a (3E)-enoyl-CoA + H2O. The enzyme catalyses a (3Z)-enoyl-CoA = a 4-saturated (2E)-enoyl-CoA. The catalysed reaction is a (3E)-enoyl-CoA = a 4-saturated (2E)-enoyl-CoA. The sequence is that of Putative fatty acid oxidation complex trifunctional enzyme from Rickettsia felis (strain ATCC VR-1525 / URRWXCal2) (Rickettsia azadi).